Here is a 393-residue protein sequence, read N- to C-terminus: Zinc finger CCHC domain-containing protein 18 (393 aa).

2 disordered regions span residues 281–300 and 313–341; these read VEPEDPPLSSPGASSLRGTA and DDFDEESPSTSSGSGQRNNGPGDLGRTRK. 2 stretches are compositionally biased toward polar residues: residues 291 to 300 and 320 to 331; these read PGASSLRGTA and PSTSSGSGQRNN. The segment at 346-363 adopts a CCHC-type zinc-finger fold; it reads IRCPHCGEEGHAKETCDN.

The protein belongs to the ZCCHC12 family.

This chain is Zinc finger CCHC domain-containing protein 18, found in Mus musculus (Mouse).